We begin with the raw amino-acid sequence, 308 residues long: Cell division protein FtsQ (308 aa).

Over 1-53 (MDSGGRIVYALNVEKTGFLRILSVTVLQRLYRRVFWFLFKCVAGIDVPRHAGS) the chain is Cytoplasmic. A helical transmembrane segment spans residues 54 to 74 (LAVFSFFFLSILYSISSGGYM). The Periplasmic segment spans residues 75–308 (NHFMKVAISN…LLKMLKAGSV (234 aa)). A POTRA domain is found at 87 to 155 (FLVTHVDMSG…DRLRISLVER (69 aa)).

Belongs to the FtsQ/DivIB family. FtsQ subfamily.

The protein localises to the cell inner membrane. In terms of biological role, essential cell division protein. The protein is Cell division protein FtsQ of Bartonella bacilliformis.